Consider the following 505-residue polypeptide: L-carnitine/gamma-butyrobetaine antiporter (505 aa).

Transmembrane regions (helical) follow at residues 10–30 (IEPK…WLTV), 51–71 (WGWA…WLVF), 92–112 (IFMM…SIEI), 143–163 (GPLP…FFFV), 195–215 (FYLV…TPLV), 231–251 (LDAI…ACGL), 263–283 (SYLS…SFIM), 316–336 (WTVF…IFLA), 347–367 (LCFG…TVLG), 403–423 (LSTA…VTLI), 446–466 (LLVR…LLAL), and 475–495 (AIIA…LSFI).

The protein belongs to the BCCT transporter (TC 2.A.15) family. CaiT subfamily. As to quaternary structure, homotrimer.

It localises to the cell inner membrane. The enzyme catalyses 4-(trimethylamino)butanoate(in) + (R)-carnitine(out) = 4-(trimethylamino)butanoate(out) + (R)-carnitine(in). It participates in amine and polyamine metabolism; carnitine metabolism. Its function is as follows. Catalyzes the exchange of L-carnitine for gamma-butyrobetaine. In Salmonella paratyphi A (strain ATCC 9150 / SARB42), this protein is L-carnitine/gamma-butyrobetaine antiporter.